The primary structure comprises 479 residues: Ribosomal RNA small subunit methyltransferase F (479 aa).

S-adenosyl-L-methionine contacts are provided by residues 125 to 131 (AAAPGSK), E149, D176, and D194. C247 acts as the Nucleophile in catalysis.

Belongs to the class I-like SAM-binding methyltransferase superfamily. RsmB/NOP family.

It is found in the cytoplasm. It catalyses the reaction cytidine(1407) in 16S rRNA + S-adenosyl-L-methionine = 5-methylcytidine(1407) in 16S rRNA + S-adenosyl-L-homocysteine + H(+). Functionally, specifically methylates the cytosine at position 1407 (m5C1407) of 16S rRNA. The chain is Ribosomal RNA small subunit methyltransferase F from Escherichia fergusonii (strain ATCC 35469 / DSM 13698 / CCUG 18766 / IAM 14443 / JCM 21226 / LMG 7866 / NBRC 102419 / NCTC 12128 / CDC 0568-73).